We begin with the raw amino-acid sequence, 959 residues long: DNA-directed RNA polymerase subunit beta'' (959 aa).

Zn(2+)-binding residues include Cys211, Cys288, Cys295, and Cys298.

Belongs to the RNA polymerase beta' chain family. RpoC2 subfamily. In terms of assembly, in plastids the minimal PEP RNA polymerase catalytic core is composed of four subunits: alpha, beta, beta', and beta''. When a (nuclear-encoded) sigma factor is associated with the core the holoenzyme is formed, which can initiate transcription. It depends on Zn(2+) as a cofactor.

The protein resides in the plastid. Its subcellular location is the apicoplast. It catalyses the reaction RNA(n) + a ribonucleoside 5'-triphosphate = RNA(n+1) + diphosphate. Its function is as follows. DNA-dependent RNA polymerase catalyzes the transcription of DNA into RNA using the four ribonucleoside triphosphates as substrates. This chain is DNA-directed RNA polymerase subunit beta'', found in Plasmodium falciparum (isolate 3D7).